The primary structure comprises 318 residues: Pantothenate kinase (318 aa).

96–103 contacts ATP; it reads GSVAVGKS.

Belongs to the prokaryotic pantothenate kinase family.

The protein resides in the cytoplasm. The catalysed reaction is (R)-pantothenate + ATP = (R)-4'-phosphopantothenate + ADP + H(+). It participates in cofactor biosynthesis; coenzyme A biosynthesis; CoA from (R)-pantothenate: step 1/5. The chain is Pantothenate kinase from Rhodopseudomonas palustris (strain HaA2).